The primary structure comprises 212 residues: Outer-membrane lipoprotein carrier protein (212 aa).

Residues 1–29 (MSSARRRALGFSFQALLLCAAGWHGAAQA) form the signal peptide.

It belongs to the LolA family. In terms of assembly, monomer.

The protein localises to the periplasm. Participates in the translocation of lipoproteins from the inner membrane to the outer membrane. Only forms a complex with a lipoprotein if the residue after the N-terminal Cys is not an aspartate (The Asp acts as a targeting signal to indicate that the lipoprotein should stay in the inner membrane). The chain is Outer-membrane lipoprotein carrier protein from Leptothrix cholodnii (strain ATCC 51168 / LMG 8142 / SP-6) (Leptothrix discophora (strain SP-6)).